The chain runs to 448 residues: UPF0210 protein PAE3581 (448 aa).

The protein belongs to the UPF0210 family.

The sequence is that of UPF0210 protein PAE3581 from Pyrobaculum aerophilum (strain ATCC 51768 / DSM 7523 / JCM 9630 / CIP 104966 / NBRC 100827 / IM2).